A 126-amino-acid chain; its full sequence is Membrane-anchored ubiquitin-fold protein 2 (126 aa).

A Ubiquitin-like domain is found at 14–79 (VEVRFRLDDG…VLENNRTLAE (66 aa)). Position 123 is a cysteine methyl ester (Cys-123). Cys-123 carries S-geranylgeranyl cysteine lipidation. Residues 124–126 (TIL) constitute a propeptide, removed in mature form.

It localises to the cell membrane. Functionally, may serve as docking site to facilitate the association of other proteins to the plasma membrane. The protein is Membrane-anchored ubiquitin-fold protein 2 (MUB2) of Oryza sativa subsp. japonica (Rice).